The sequence spans 580 residues: Mucin-1 (580 aa).

A signal peptide spans 1 to 22 (MTPDIQAPFLSLLLLFPVLTVA). Residues 23–489 (NVPTLTTSDS…GSGVPGWGIA (467 aa)) are Extracellular-facing. The segment covering 28–37 (TTSDSINPRR) has biased composition (polar residues). Residues 28-359 (TTSDSINPRR…SIALSTSSNP (332 aa)) are disordered. The span at 38-88 (TTPVSTTQSSPTSSPTKETSWSTTTTLLTASSPAPSPAASPGHDGASTPTS) shows a compositional bias: low complexity. 11 consecutive repeat copies span residues 70–89 (PAPS…PTSS), 90–109 (PAPS…PTSS), 110–129 (PAPS…PTSS), 130–149 (PAPS…PTSS), 150–169 (PAPS…PTGS), 170–189 (PAPS…PTSS), 190–209 (PAPS…PTGS), 210–229 (PAPS…PTSS), 230–249 (PAPS…PTGS), 250–269 (PAPS…LTSS), and 270–289 (PAPS…PTSS). Residues 70-289 (PAPSPAASPG…QHGASSPTSS (220 aa)) are 11 X 20 AA approximate tandem repeats of P-A-P-S-P-A-A-S-P-G-H-D-G-A-S-T-P-T-S-S. O-linked (GalNAc...) serine glycosylation is found at S73, S77, and S84. O-linked (GalNAc...) threonine glycosylation is found at T85 and T87. 2 O-linked (GalNAc...) serine glycosylation sites follow: S88 and S89. Composition is skewed to low complexity over residues 96–108 (ASPG…TPTS), 116–128 (ASPG…TPTS), 136–148 (ASPG…TPTS), 156–168 (ASPG…SPTG), 176–188 (ASPG…TPTS), 196–208 (ASPG…SPTG), 216–228 (ASPG…TPTS), 236–248 (ASPG…SPTG), and 256–306 (ASPG…MVTS). Residue N161 is glycosylated (N-linked (GlcNAc...) asparagine). N-linked (GlcNAc...) asparagine glycosylation is present at N201. The N-linked (GlcNAc...) asparagine glycan is linked to N241. Residues 308-344 (HKGTSSRATMTPVSKGTPSSVPSSETAPTAASHITRT) show a composition bias toward polar residues. Over residues 345 to 357 (AASSPSIALSTSS) the composition is skewed to low complexity. The SEA domain occupies 368-475 (RVSLYFLSFR…VSVYSAPFPS (108 aa)). N-linked (GlcNAc...) asparagine glycosylation is found at N384 and N460. Residues 490-510 (LLVLVCVLVALAIIYLIALVV) form a helical membrane-spanning segment. S-palmitoyl cysteine attachment occurs at residues C511 and C513. Residues 511 to 580 (CQCGRKKCEQ…TNLAATSANL (70 aa)) are Cytoplasmic-facing. The tract at residues 519-555 (EQLDVFPTLDAYHPMSEYSTYHTHGRYVPPGSTKRSP) is interaction with P53. Position 530 is a phosphotyrosine; by PDGFR (Y530). The Interaction with GRB2 motif lies at 530 to 533 (YHPM). Phosphotyrosine is present on Y539. Residues 544-563 (RYVPPGSTKRSPYEEVSAGN) are disordered. The residue at position 545 (Y545) is a Phosphotyrosine; by PDGFR. Residues 550–557 (STKRSPYE) form a required for interaction with GSK3B region. At T551 the chain carries Phosphothreonine; by PKC/PRKCD. S554 is modified (phosphoserine; by GSK3-beta). Position 556 is a phosphotyrosine; by CSK, EGFR and SRC (Y556). An Interaction with SRC and ESR1 motif is present at residues 556-559 (YEEV). A required for interaction with beta- and gamma-catenins region spans residues 560-568 (SAGNGGSNL). Y570 is subject to Phosphotyrosine. Residues 570-572 (YTN) carry the Required for interaction with AP1S2 motif.

The alpha subunit forms a tight, non-covalent heterodimeric complex with the proteolytically-released beta subunit. Binds directly the SH2 domain of GRB2, and forms a MUC1/GRB2/SOS1 complex involved in RAS signaling. The cytoplasmic tail (MUC1CT) interacts with several proteins such as, SRC, CTNNB1 and ERBs. Interaction with the SH2 domain of CSK decreases interaction with GSK3B. Interacts with CTNNB1/beta-catenin and JUP/gamma-catenin and promotes cell adhesion. Interaction with JUP/gamma-catenin is induced by heregulin. Binds PRKCD, ERBB2, ERBB3 and ERBB4. Heregulin (HRG) stimulates the interaction with ERBB2 and, to a much lesser extent, the interaction with ERBB3 and ERBB4. Interacts with P53 in response to DNA damage. Interacts with KLF4. Interacts with estrogen receptor alpha/ESR1, through its DNA-binding domain, and stimulates its transcription activity. Binds ADAM17. Highly glycosylated (N- and O-linked carbohydrates and sialic acid). O-linked glycosylation consists mainly of GalNAc, galactose, and sialic acid. The ratio from pools of milk from different dairy breeds is GalNAc: GlcNAc:galactose:mannose:sialic acid is 14:1:10:1:15. Post-translationally, proteolytic cleavage in the SEA domain occurs in the endoplasmic reticulum by an autoproteolytic mechanism and requires the full-length SEA domain as well as requiring a Ser, Thr or Cys residue at the P + 1 site. Ectodomain shedding is mediated by ADAM17 in uterine epithelial cells. In terms of processing, dual palmitoylation on cysteine residues in the CQC motif is required for recycling from endosomes back to the plasma membrane. Phosphorylated on tyrosines and serine residues in the C-terminal. Phosphorylation on tyrosines in the C-terminal increases the nuclear location of MUC1 and beta-catenin. Phosphorylation by PKC delta induces binding of MUC1 to beta-catenin/CTNNB1 and thus decreases the formation of the beta-catenin/E-cadherin complex. Src-mediated phosphorylation inhibits interaction with GSK3B. Csk- or Src- or EGFR-mediated phosphorylation on Tyr-556 increases binding to beta-catenin/CTNNB1. GSK3B-mediated phosphorylation on Ser-554 decreases this interaction but restores the formation of the beta-cadherin/E-cadherin complex. On T-cell receptor activation, phosphorylated by LCK. PDGFR-mediated phosphorylation increases nuclear colocalization of MUC1CT and CTNNB1. In terms of tissue distribution, expressed on the apical surface of epithelia cells, and on the milk fat globule membrane (MGGM).

It is found in the apical cell membrane. The protein resides in the cell membrane. It localises to the cytoplasm. Its subcellular location is the nucleus. In terms of biological role, the alpha subunit has cell adhesive properties. May provide a protective layer on epithelial cells against bacterial and enzyme attack. Functionally, the beta subunit contains a C-terminal domain which is involved in cell signaling, through phosphorylations and protein-protein interactions. Modulates signaling in ERK, Src and NF-kappa-B pathways. In activated T-cells, influences directly or indirectly the Ras/MAPK pathway. Promotes tumor progression. Regulates P53-mediated transcription and determines cell fate in the genotoxic stress response. Binds, together with KLF4, the PE21 promoter element of P53 and represses P53 activity. In Bos taurus (Bovine), this protein is Mucin-1 (MUC1).